Reading from the N-terminus, the 326-residue chain is Pyruvate dehydrogenase E1 component subunit alpha (326 aa).

Heterodimer of an alpha and a beta chain. Requires thiamine diphosphate as cofactor.

It carries out the reaction N(6)-[(R)-lipoyl]-L-lysyl-[protein] + pyruvate + H(+) = N(6)-[(R)-S(8)-acetyldihydrolipoyl]-L-lysyl-[protein] + CO2. Its function is as follows. The pyruvate dehydrogenase complex catalyzes the overall conversion of pyruvate to acetyl-CoA and CO(2). It contains multiple copies of three enzymatic components: pyruvate dehydrogenase (E1), dihydrolipoamide acetyltransferase (E2) and lipoamide dehydrogenase (E3). This Rickettsia conorii (strain ATCC VR-613 / Malish 7) protein is Pyruvate dehydrogenase E1 component subunit alpha (pdhA).